Here is a 441-residue protein sequence, read N- to C-terminus: Glutamate--tRNA ligase 1 (441 aa).

Positions 8-18 (PSPTGYIHIGN) match the 'HIGH' region motif. The short motif at 239–243 (ALSKR) is the 'KMSKS' region element. An ATP-binding site is contributed by Lys-242.

It belongs to the class-I aminoacyl-tRNA synthetase family. Glutamate--tRNA ligase type 1 subfamily. In terms of assembly, monomer.

It is found in the cytoplasm. The enzyme catalyses tRNA(Glu) + L-glutamate + ATP = L-glutamyl-tRNA(Glu) + AMP + diphosphate. Catalyzes the attachment of glutamate to tRNA(Glu) in a two-step reaction: glutamate is first activated by ATP to form Glu-AMP and then transferred to the acceptor end of tRNA(Glu). The polypeptide is Glutamate--tRNA ligase 1 (Roseobacter denitrificans (strain ATCC 33942 / OCh 114) (Erythrobacter sp. (strain OCh 114))).